The primary structure comprises 228 residues: Biopolymer transport protein exbB1 (228 aa).

The next 3 helical transmembrane spans lie at Leu11–Glu31, Leu116–Ile136, and Leu158–Gly178.

This sequence belongs to the ExbB/TolQ family. The accessory proteins ExbB and ExbD seem to form a complex with TonB.

It localises to the cell inner membrane. Its function is as follows. Involved in the TonB-dependent energy-dependent transport of various receptor-bound substrates. Protects ExbD from proteolytic degradation and functionally stabilizes TonB. This is Biopolymer transport protein exbB1 (exbB1) from Vibrio cholerae serotype O1 (strain ATCC 39315 / El Tor Inaba N16961).